A 149-amino-acid chain; its full sequence is 3-dehydroquinate dehydratase (149 aa).

The Proton acceptor role is filled by Tyr23. Asn75, His81, and Asp88 together coordinate substrate. His101 acts as the Proton donor in catalysis. Residues 102-103 (MS) and Arg112 each bind substrate.

This sequence belongs to the type-II 3-dehydroquinase family. In terms of assembly, homododecamer.

It carries out the reaction 3-dehydroquinate = 3-dehydroshikimate + H2O. It functions in the pathway metabolic intermediate biosynthesis; chorismate biosynthesis; chorismate from D-erythrose 4-phosphate and phosphoenolpyruvate: step 3/7. Functionally, catalyzes a trans-dehydration via an enolate intermediate. This is 3-dehydroquinate dehydratase from Pelobacter propionicus (strain DSM 2379 / NBRC 103807 / OttBd1).